A 374-amino-acid chain; its full sequence is MLSIIFGSKPREDEIDSVDRYMTKLFLRIIFIPDYTNKIHDLSENVSKNIKNLIMELKSGNIFEINKILDDLEYNIYTIDDESLTIKERVYNAVEIIFKVVSNEILRTESIDDKELEIIKKLHELVVLTDKVLRITYNSLNRSLEDINSYRRIIANNNLPDDIIRRLNIINAYIEKIKSDILSMRENEQRVLIICLSKFYNLYLSKDKKEREKLADEIKNLIEYLYFDWYYDFIDNIGEYEFKFIKNIAAMCLLYDYTKELEKDGSKEMFNHVIFKILRNGGFKVKEYDIIETLLNIRENLPKSSKIDVRYFDKELIKIIRGIVRESKKDVFYNNMKRLKEFVEELREMEKKLSEANNITLHDLRKLGFNDMFL.

This is an uncharacterized protein from Methanocaldococcus jannaschii (strain ATCC 43067 / DSM 2661 / JAL-1 / JCM 10045 / NBRC 100440) (Methanococcus jannaschii).